Consider the following 382-residue polypeptide: ATP phosphoribosyltransferase regulatory subunit (382 aa).

It belongs to the class-II aminoacyl-tRNA synthetase family. HisZ subfamily. Heteromultimer composed of HisG and HisZ subunits.

Its subcellular location is the cytoplasm. It functions in the pathway amino-acid biosynthesis; L-histidine biosynthesis; L-histidine from 5-phospho-alpha-D-ribose 1-diphosphate: step 1/9. Required for the first step of histidine biosynthesis. May allow the feedback regulation of ATP phosphoribosyltransferase activity by histidine. The sequence is that of ATP phosphoribosyltransferase regulatory subunit from Acidovorax sp. (strain JS42).